Here is a 712-residue protein sequence, read N- to C-terminus: Protein SDA1 homolog (712 aa).

T234 is modified (phosphothreonine). The residue at position 236 (S236) is a Phosphoserine. Disordered regions lie at residues 488 to 573 and 662 to 712; these read TIDI…DMRI and VNEH…KKMK. Composition is skewed to acidic residues over residues 491-501 and 516-559; these read IESEDDTDSND and GADD…ESGE. Residues 560 to 572 are compositionally biased toward basic and acidic residues; sequence ESAKAKKEKKDMR. Basic residues-rich tracts occupy residues 671 to 692 and 700 to 712; these read REKR…KVKK and ALRK…KKMK.

The protein belongs to the SDA1 family.

The protein localises to the nucleus. The protein resides in the nucleolus. Its function is as follows. Required for 60S pre-ribosomal subunits export to the cytoplasm. The sequence is that of Protein SDA1 homolog (Mys45A) from Drosophila melanogaster (Fruit fly).